The following is a 403-amino-acid chain: Phosphopentomutase (403 aa).

Positions 13, 298, 303, 339, 340, and 351 each coordinate Mn(2+).

Belongs to the phosphopentomutase family. Requires Mn(2+) as cofactor.

The protein resides in the cytoplasm. The catalysed reaction is 2-deoxy-alpha-D-ribose 1-phosphate = 2-deoxy-D-ribose 5-phosphate. The enzyme catalyses alpha-D-ribose 1-phosphate = D-ribose 5-phosphate. Its pathway is carbohydrate degradation; 2-deoxy-D-ribose 1-phosphate degradation; D-glyceraldehyde 3-phosphate and acetaldehyde from 2-deoxy-alpha-D-ribose 1-phosphate: step 1/2. Functionally, isomerase that catalyzes the conversion of deoxy-ribose 1-phosphate (dRib-1-P) and ribose 1-phosphate (Rib-1-P) to deoxy-ribose 5-phosphate (dRib-5-P) and ribose 5-phosphate (Rib-5-P), respectively. In Streptococcus pneumoniae serotype 19F (strain G54), this protein is Phosphopentomutase.